Consider the following 336-residue polypeptide: Holliday junction branch migration complex subunit RuvB (336 aa).

Residues 1-183 form a large ATPase domain (RuvB-L) region; it reads MATERLVAGN…FGINSRLEFY (183 aa). Residues leucine 22, arginine 23, glycine 64, lysine 67, threonine 68, threonine 69, 130-132, arginine 173, tyrosine 183, and arginine 220 each bind ATP; that span reads EDF. Mg(2+) is bound at residue threonine 68. Positions 184–254 are small ATPAse domain (RuvB-S); it reads QVAELEEIIR…VAREALELLQ (71 aa). The interval 257-336 is head domain (RuvB-H); that stretch reads AAGLDSSDRR…LGIKPEDRLF (80 aa). 2 residues coordinate DNA: arginine 312 and arginine 317.

It belongs to the RuvB family. As to quaternary structure, homohexamer. Forms an RuvA(8)-RuvB(12)-Holliday junction (HJ) complex. HJ DNA is sandwiched between 2 RuvA tetramers; dsDNA enters through RuvA and exits via RuvB. An RuvB hexamer assembles on each DNA strand where it exits the tetramer. Each RuvB hexamer is contacted by two RuvA subunits (via domain III) on 2 adjacent RuvB subunits; this complex drives branch migration. In the full resolvosome a probable DNA-RuvA(4)-RuvB(12)-RuvC(2) complex forms which resolves the HJ.

The protein resides in the cytoplasm. The catalysed reaction is ATP + H2O = ADP + phosphate + H(+). Functionally, the RuvA-RuvB-RuvC complex processes Holliday junction (HJ) DNA during genetic recombination and DNA repair, while the RuvA-RuvB complex plays an important role in the rescue of blocked DNA replication forks via replication fork reversal (RFR). RuvA specifically binds to HJ cruciform DNA, conferring on it an open structure. The RuvB hexamer acts as an ATP-dependent pump, pulling dsDNA into and through the RuvAB complex. RuvB forms 2 homohexamers on either side of HJ DNA bound by 1 or 2 RuvA tetramers; 4 subunits per hexamer contact DNA at a time. Coordinated motions by a converter formed by DNA-disengaged RuvB subunits stimulates ATP hydrolysis and nucleotide exchange. Immobilization of the converter enables RuvB to convert the ATP-contained energy into a lever motion, pulling 2 nucleotides of DNA out of the RuvA tetramer per ATP hydrolyzed, thus driving DNA branch migration. The RuvB motors rotate together with the DNA substrate, which together with the progressing nucleotide cycle form the mechanistic basis for DNA recombination by continuous HJ branch migration. Branch migration allows RuvC to scan DNA until it finds its consensus sequence, where it cleaves and resolves cruciform DNA. This is Holliday junction branch migration complex subunit RuvB from Moorella thermoacetica (strain ATCC 39073 / JCM 9320).